The following is a 144-amino-acid chain: MRLNSLSPAEGAKHSAKRLGRGIGSGLGKTGGRGHKGQKSRTGGGVRRGFEGGQMPLYRRLPKFGFTSLKALHVAEIRLSDLAKVDGNVVTLDALKAANVITKDILSAKVILSGKVEKAVVVKGLGVTKGAKAAIEAAGGSIEE.

Residues 1 to 53 form a disordered region; the sequence is MRLNSLSPAEGAKHSAKRLGRGIGSGLGKTGGRGHKGQKSRTGGGVRRGFEGG. A compositionally biased stretch (gly residues) spans 21–31; the sequence is RGIGSGLGKTG.

This sequence belongs to the universal ribosomal protein uL15 family. Part of the 50S ribosomal subunit.

Binds to the 23S rRNA. The protein is Large ribosomal subunit protein uL15 of Glaesserella parasuis serovar 5 (strain SH0165) (Haemophilus parasuis).